Consider the following 83-residue polypeptide: Apolipoprotein C-I, basic form (83 aa).

The N-terminal stretch at 1-26 (MRLFLSLPVLVVVLSMVLEGPAPVQG) is a signal peptide.

This sequence belongs to the apolipoprotein C1 family.

It localises to the secreted. Inhibitor of lipoprotein binding to the low density lipoprotein (LDL) receptor, LDL receptor-related protein, and very low density lipoprotein (VLDL) receptor. Associates with high density lipoproteins (HDL) and the triacylglycerol-rich lipoproteins in the plasma and makes up about 10% of the protein of the VLDL and 2% of that of HDL. Appears to interfere directly with fatty acid uptake and is also the major plasma inhibitor of cholesteryl ester transfer protein (CETP). Binds free fatty acids and reduces their intracellular esterification. Modulates the interaction of APOE with beta-migrating VLDL and inhibits binding of beta-VLDL to the LDL receptor-related protein. The protein is Apolipoprotein C-I, basic form (APOC1) of Papio anubis (Olive baboon).